The following is a 278-amino-acid chain: Transmembrane protein 45B (278 aa).

Helical transmembrane passes span 7–27, 49–69, 95–115, 117–137, 149–169, 183–203, and 215–235; these read HALP…KYPL, IIEG…EQFV, YLFF…FHIV, LGLD…LFYF, IHSL…LEVI, LLIL…PPFG, and IMFI…IVAI. A phosphoserine mark is found at serine 273 and serine 275.

It belongs to the TMEM45 family.

The protein localises to the endosome membrane. The protein resides in the lysosome membrane. Its subcellular location is the golgi apparatus. It localises to the trans-Golgi network membrane. Plays a role in innate immunity. This chain is Transmembrane protein 45B (Tmem45b), found in Mus musculus (Mouse).